The following is a 276-amino-acid chain: 3-methyl-2-oxobutanoate hydroxymethyltransferase (276 aa).

Mg(2+) is bound by residues D45 and D84. Residues 45–46 (DS), D84, and K114 each bind 3-methyl-2-oxobutanoate. E116 contacts Mg(2+). The active-site Proton acceptor is E183.

Belongs to the PanB family. In terms of assembly, homodecamer; pentamer of dimers. It depends on Mg(2+) as a cofactor.

The protein resides in the cytoplasm. The enzyme catalyses 3-methyl-2-oxobutanoate + (6R)-5,10-methylene-5,6,7,8-tetrahydrofolate + H2O = 2-dehydropantoate + (6S)-5,6,7,8-tetrahydrofolate. Its pathway is cofactor biosynthesis; (R)-pantothenate biosynthesis; (R)-pantoate from 3-methyl-2-oxobutanoate: step 1/2. In terms of biological role, catalyzes the reversible reaction in which hydroxymethyl group from 5,10-methylenetetrahydrofolate is transferred onto alpha-ketoisovalerate to form ketopantoate. In Carboxydothermus hydrogenoformans (strain ATCC BAA-161 / DSM 6008 / Z-2901), this protein is 3-methyl-2-oxobutanoate hydroxymethyltransferase.